A 270-amino-acid polypeptide reads, in one-letter code: 3-methyl-2-oxobutanoate hydroxymethyltransferase (270 aa).

The Mg(2+) site is built by aspartate 50 and aspartate 89. 3-methyl-2-oxobutanoate contacts are provided by residues 50 to 51 (DS), aspartate 89, and lysine 118. Glutamate 120 serves as a coordination point for Mg(2+). Catalysis depends on glutamate 187, which acts as the Proton acceptor.

The protein belongs to the PanB family. Homodecamer; pentamer of dimers. Requires Mg(2+) as cofactor.

It localises to the cytoplasm. The catalysed reaction is 3-methyl-2-oxobutanoate + (6R)-5,10-methylene-5,6,7,8-tetrahydrofolate + H2O = 2-dehydropantoate + (6S)-5,6,7,8-tetrahydrofolate. The protein operates within cofactor biosynthesis; (R)-pantothenate biosynthesis; (R)-pantoate from 3-methyl-2-oxobutanoate: step 1/2. Its function is as follows. Catalyzes the reversible reaction in which hydroxymethyl group from 5,10-methylenetetrahydrofolate is transferred onto alpha-ketoisovalerate to form ketopantoate. This is 3-methyl-2-oxobutanoate hydroxymethyltransferase from Helicobacter pylori (strain Shi470).